Consider the following 168-residue polypeptide: Cell division inhibitor SulA (168 aa).

Residues 106 to 112 (ALLTGNY) form a ftsZ binding region. A lon protease binding region spans residues 161–168 (KIHSYLYH).

Belongs to the SulA family. As to quaternary structure, interacts with FtsZ. In terms of processing, is rapidly cleaved and degraded by the Lon protease once DNA damage is repaired.

Component of the SOS system and an inhibitor of cell division. Accumulation of SulA causes rapid cessation of cell division and the appearance of long, non-septate filaments. In the presence of GTP, binds a polymerization-competent form of FtsZ in a 1:1 ratio, thus inhibiting FtsZ polymerization and therefore preventing it from participating in the assembly of the Z ring. This mechanism prevents the premature segregation of damaged DNA to daughter cells during cell division. The chain is Cell division inhibitor SulA from Yersinia pseudotuberculosis serotype O:1b (strain IP 31758).